A 742-amino-acid chain; its full sequence is Two pore calcium channel protein 1 (742 aa).

A disordered region spans residues 1–37 (MSEAEAPLITEEAAERGLASSGSRRLSDGAGGQGSRK). Residues 1–82 (MSEAEAPLIT…NDTRFGRAMS (82 aa)) lie on the Cytoplasmic side of the membrane. A helical transmembrane segment spans residues 83–103 (FYFVYLRLDWLWSLNLFALIL). Over 104–140 (LNFLEKPLWCRKDALQAYDQRDLYFLGQLPYFSKTES) the chain is Extracellular. Residues 141 to 161 (LIYEGLTLVILVMDIFCPLSY) traverse the membrane as a helical segment. Residues 162–176 (EGLNIFWRSTTNKLK) lie on the Cytoplasmic side of the membrane. Residues 177–197 (IVLLFILACDILVFAFSSQPF) form a helical membrane-spanning segment. Topologically, residues 198–204 (RLAPYIR) are extracellular. Residues 205–226 (VVFLIMTIRELRMCAITLAGLI) form a helical; Voltage-sensor membrane-spanning segment. A helical membrane pass occupies residues 227–247 (GTYLNVLALSLLFLLFASWLA). The Extracellular segment spans residues 248–258 (YVTFEDTPQGK). An intramembrane region (pore-forming) is located at residues 259–273 (TIFSSYGVTLYQMFV). The Extracellular portion of the chain corresponds to 274–296 (LFTTSNNPDVWVHAYKIPRWYSL). Residues 297-317 (FFIVYVLLGVYFLTNLILAVI) form a helical membrane-spanning segment. Topologically, residues 318–446 (YDSFKEQFAK…SFVRSRMFEY (129 aa)) are cytoplasmic. EF-hand domains follow at residues 335 to 370 (IRKN…LNKY) and 376 to 411 (TSRE…IAIK). The chain crosses the membrane as a helical span at residues 447 to 467 (IIVFVLLINLVAVIIETTLDI). The Extracellular portion of the chain corresponds to 468–480 (ENSSSQETWQEVE). An N-linked (GlcNAc...) asparagine glycan is attached at asparagine 469. A helical membrane pass occupies residues 481 to 501 (FFLGWIYVAEMALKIFSLGFG). Residues 502-510 (AYWMEGQNK) lie on the Cytoplasmic side of the membrane. The chain crosses the membrane as a helical span at residues 511 to 531 (FDFVLTWTIFIGETLTFAFPS). The Extracellular portion of the chain corresponds to 532–540 (KLPFLSNGE). The helical; Voltage-sensor transmembrane segment at 541 to 558 (WIRYLLLGRVLRLTRILL) threads the bilayer. Residues 559 to 582 (QVQRFRAFVATFFTLMSSLMPYLG) are Cytoplasmic-facing. A helical membrane pass occupies residues 583–603 (IVFCVLCMYCSIGLQIFGGIV). Residues 604 to 627 (YAGNPTLEETDLFNNDYLLFNFND) lie on the Extracellular side of the membrane. The segment at residues 628–642 (YPSGMVTLFNLLVMG) is an intramembrane region (pore-forming). Residues 643 to 663 (NWQVWMESYWQLTGTSWSLIY) are Extracellular-facing. Residues 664-684 (FVSFYLISILLLLNLIVAFVL) traverse the membrane as a helical segment. At 685 to 742 (EAFFAEMELEKGEEVDIQNPTSGGIKKRRSMRVRSKGTMVDILLHHMLSNELDGSQNS) the chain is on the cytoplasmic side.

It belongs to the calcium channel alpha-1 subunit (TC 1.A.1.11) family. Two pore calcium channel subfamily. In terms of assembly, homodimer.

It localises to the membrane. Its activity is regulated as follows. Inhibited by Al(3+). Its function is as follows. Functions as a voltage-gated inward-rectifying Ca(2+) channel (VDCC) across the plasma membrane that mediates sucrose-induced Ca(2+) influx in autotrophically grown leaf cells. Acts as the major ROS-responsive Ca(2+) channel and is the possible target of Al-dependent inhibition. Plays a regulatory role in defense responses. This is Two pore calcium channel protein 1 (TPC1) from Triticum aestivum (Wheat).